The following is a 253-amino-acid chain: Probable transcriptional regulatory protein RBE_0568 (253 aa).

The tract at residues 1 to 21 (MAGHSKFKNIQHRKGAQDKKR) is disordered.

It belongs to the TACO1 family.

The protein localises to the cytoplasm. This is Probable transcriptional regulatory protein RBE_0568 from Rickettsia bellii (strain RML369-C).